The sequence spans 536 residues: CTP synthase (536 aa).

The interval 1–267 (MTKFIFVTGG…DDIVIKRLQL (267 aa)) is amidoligase domain. A CTP-binding site is contributed by S13. S13 is a binding site for UTP. 14-19 (SLGKGI) is a binding site for ATP. Residue Y54 participates in L-glutamine binding. D71 contributes to the ATP binding site. Mg(2+) is bound by residues D71 and E141. Residues 148-150 (DIE), 188-193 (KTKPTQ), and K224 each bind CTP. UTP is bound by residues 188 to 193 (KTKPTQ) and K224. 240–242 (RDA) is an ATP binding site. Residues 293-535 (TIGLVGKYVS…IEASLKYQQN (243 aa)) enclose the Glutamine amidotransferase type-1 domain. G355 is a binding site for L-glutamine. Catalysis depends on C382, which acts as the Nucleophile; for glutamine hydrolysis. L-glutamine-binding positions include 383–386 (LGMQ), E406, and R463. Catalysis depends on residues H508 and E510.

This sequence belongs to the CTP synthase family. As to quaternary structure, homotetramer.

It carries out the reaction UTP + L-glutamine + ATP + H2O = CTP + L-glutamate + ADP + phosphate + 2 H(+). The enzyme catalyses L-glutamine + H2O = L-glutamate + NH4(+). The catalysed reaction is UTP + NH4(+) + ATP = CTP + ADP + phosphate + 2 H(+). Its pathway is pyrimidine metabolism; CTP biosynthesis via de novo pathway; CTP from UDP: step 2/2. Its activity is regulated as follows. Allosterically activated by GTP, when glutamine is the substrate; GTP has no effect on the reaction when ammonia is the substrate. The allosteric effector GTP functions by stabilizing the protein conformation that binds the tetrahedral intermediate(s) formed during glutamine hydrolysis. Inhibited by the product CTP, via allosteric rather than competitive inhibition. Functionally, catalyzes the ATP-dependent amination of UTP to CTP with either L-glutamine or ammonia as the source of nitrogen. Regulates intracellular CTP levels through interactions with the four ribonucleotide triphosphates. In Staphylococcus aureus (strain COL), this protein is CTP synthase.